A 178-amino-acid chain; its full sequence is NADH-quinone oxidoreductase subunit B (178 aa).

Residues Cys-45, Cys-46, Cys-111, and Cys-140 each coordinate [4Fe-4S] cluster.

Belongs to the complex I 20 kDa subunit family. As to quaternary structure, NDH-1 is composed of 15 different subunits. Subunits NuoB, C, D, E, F, and G constitute the peripheral sector of the complex. The cofactor is [4Fe-4S] cluster.

The protein resides in the cell membrane. The catalysed reaction is a quinone + NADH + 5 H(+)(in) = a quinol + NAD(+) + 4 H(+)(out). Functionally, NDH-1 shuttles electrons from NADH, via FMN and iron-sulfur (Fe-S) centers, to quinones in the respiratory chain. The immediate electron acceptor for the enzyme in this species is believed to be a menaquinone. Couples the redox reaction to proton translocation (for every two electrons transferred, four hydrogen ions are translocated across the cytoplasmic membrane), and thus conserves the redox energy in a proton gradient. The sequence is that of NADH-quinone oxidoreductase subunit B from Deinococcus geothermalis (strain DSM 11300 / CIP 105573 / AG-3a).